Reading from the N-terminus, the 293-residue chain is Digeranylgeranylglyceryl phosphate synthase (293 aa).

Transmembrane regions (helical) follow at residues 26–46 (LMYG…FSDL), 50–70 (LLGY…NDYF), 107–127 (FVAA…VSVL), 140–160 (FAGN…GSII), 215–235 (IASL…FLLP), 237–257 (FLFD…LIYV), and 273–293 (YRKV…AGAF).

The protein belongs to the UbiA prenyltransferase family. DGGGP synthase subfamily. Requires Mg(2+) as cofactor.

It is found in the cell membrane. The catalysed reaction is sn-3-O-(geranylgeranyl)glycerol 1-phosphate + (2E,6E,10E)-geranylgeranyl diphosphate = 2,3-bis-O-(geranylgeranyl)-sn-glycerol 1-phosphate + diphosphate. Its pathway is membrane lipid metabolism; glycerophospholipid metabolism. Prenyltransferase that catalyzes the transfer of the geranylgeranyl moiety of geranylgeranyl diphosphate (GGPP) to the C2 hydroxyl of (S)-3-O-geranylgeranylglyceryl phosphate (GGGP). This reaction is the second ether-bond-formation step in the biosynthesis of archaeal membrane lipids. The polypeptide is Digeranylgeranylglyceryl phosphate synthase (Archaeoglobus fulgidus (strain ATCC 49558 / DSM 4304 / JCM 9628 / NBRC 100126 / VC-16)).